The sequence spans 360 residues: Holliday junction branch migration complex subunit RuvB (360 aa).

A large ATPase domain (RuvB-L) region spans residues 4–196; the sequence is HEEDLDQAEE…FGFTAHLEFY (193 aa). ATP contacts are provided by residues Leu35, Arg36, Gly77, Lys80, Thr81, Thr82, 143–145, Arg186, Tyr196, and Arg233; that span reads EDF. Thr81 is a binding site for Mg(2+). The small ATPAse domain (RuvB-S) stretch occupies residues 197–267; it reads EPDELDLIVQ…VAQDALDLYE (71 aa). The interval 270-360 is head domain (RuvB-H); that stretch reads QLGLDRLDRG…PESDPPLFED (91 aa). DNA contacts are provided by Arg306, Arg325, and Arg330.

This sequence belongs to the RuvB family. Homohexamer. Forms an RuvA(8)-RuvB(12)-Holliday junction (HJ) complex. HJ DNA is sandwiched between 2 RuvA tetramers; dsDNA enters through RuvA and exits via RuvB. An RuvB hexamer assembles on each DNA strand where it exits the tetramer. Each RuvB hexamer is contacted by two RuvA subunits (via domain III) on 2 adjacent RuvB subunits; this complex drives branch migration. In the full resolvosome a probable DNA-RuvA(4)-RuvB(12)-RuvC(2) complex forms which resolves the HJ.

The protein resides in the cytoplasm. It catalyses the reaction ATP + H2O = ADP + phosphate + H(+). Functionally, the RuvA-RuvB-RuvC complex processes Holliday junction (HJ) DNA during genetic recombination and DNA repair, while the RuvA-RuvB complex plays an important role in the rescue of blocked DNA replication forks via replication fork reversal (RFR). RuvA specifically binds to HJ cruciform DNA, conferring on it an open structure. The RuvB hexamer acts as an ATP-dependent pump, pulling dsDNA into and through the RuvAB complex. RuvB forms 2 homohexamers on either side of HJ DNA bound by 1 or 2 RuvA tetramers; 4 subunits per hexamer contact DNA at a time. Coordinated motions by a converter formed by DNA-disengaged RuvB subunits stimulates ATP hydrolysis and nucleotide exchange. Immobilization of the converter enables RuvB to convert the ATP-contained energy into a lever motion, pulling 2 nucleotides of DNA out of the RuvA tetramer per ATP hydrolyzed, thus driving DNA branch migration. The RuvB motors rotate together with the DNA substrate, which together with the progressing nucleotide cycle form the mechanistic basis for DNA recombination by continuous HJ branch migration. Branch migration allows RuvC to scan DNA until it finds its consensus sequence, where it cleaves and resolves cruciform DNA. The chain is Holliday junction branch migration complex subunit RuvB from Nocardioides sp. (strain ATCC BAA-499 / JS614).